A 201-amino-acid chain; its full sequence is Pyridoxal 5'-phosphate synthase subunit PdxT (201 aa).

49 to 51 (GES) contributes to the L-glutamine binding site. The active-site Nucleophile is the Cys-81. Residues Arg-110 and 139-140 (IR) each bind L-glutamine. Active-site charge relay system residues include His-180 and Glu-182.

Belongs to the glutaminase PdxT/SNO family. In terms of assembly, in the presence of PdxS, forms a dodecamer of heterodimers. Only shows activity in the heterodimer.

The enzyme catalyses aldehydo-D-ribose 5-phosphate + D-glyceraldehyde 3-phosphate + L-glutamine = pyridoxal 5'-phosphate + L-glutamate + phosphate + 3 H2O + H(+). The catalysed reaction is L-glutamine + H2O = L-glutamate + NH4(+). It functions in the pathway cofactor biosynthesis; pyridoxal 5'-phosphate biosynthesis. Its function is as follows. Catalyzes the hydrolysis of glutamine to glutamate and ammonia as part of the biosynthesis of pyridoxal 5'-phosphate. The resulting ammonia molecule is channeled to the active site of PdxS. In Salinispora arenicola (strain CNS-205), this protein is Pyridoxal 5'-phosphate synthase subunit PdxT.